The primary structure comprises 152 residues: Lipoprotein signal peptidase (152 aa).

Helical transmembrane passes span 5-25 (LFVL…FWIV), 61-81 (WFFV…LATH), and 84-104 (LNIW…GNFI). Active-site residues include Asp-114 and Asp-130. A helical membrane pass occupies residues 125–145 (IFNVADSYLTVGVILLVICLW).

The protein belongs to the peptidase A8 family.

The protein resides in the cell membrane. It carries out the reaction Release of signal peptides from bacterial membrane prolipoproteins. Hydrolyzes -Xaa-Yaa-Zaa-|-(S,diacylglyceryl)Cys-, in which Xaa is hydrophobic (preferably Leu), and Yaa (Ala or Ser) and Zaa (Gly or Ala) have small, neutral side chains.. It functions in the pathway protein modification; lipoprotein biosynthesis (signal peptide cleavage). This protein specifically catalyzes the removal of signal peptides from prolipoproteins. This chain is Lipoprotein signal peptidase, found in Streptococcus pyogenes serotype M3 (strain ATCC BAA-595 / MGAS315).